The following is a 239-amino-acid chain: Ribonuclease PH (239 aa).

Residues Arg86 and 124–126 (GTR) contribute to the phosphate site.

It belongs to the RNase PH family. Homohexameric ring arranged as a trimer of dimers.

The catalysed reaction is tRNA(n+1) + phosphate = tRNA(n) + a ribonucleoside 5'-diphosphate. Functionally, phosphorolytic 3'-5' exoribonuclease that plays an important role in tRNA 3'-end maturation. Removes nucleotide residues following the 3'-CCA terminus of tRNAs; can also add nucleotides to the ends of RNA molecules by using nucleoside diphosphates as substrates, but this may not be physiologically important. Probably plays a role in initiation of 16S rRNA degradation (leading to ribosome degradation) during starvation. The polypeptide is Ribonuclease PH (Rhodopseudomonas palustris (strain BisB18)).